The following is a 310-amino-acid chain: MEIASQEDPIPINTSYGNSGGGHGNMNHHHHANSAPSSLNITTSNPLLVSSNSNGLGKNHDHSHHHHVGYNIMVTNIKKEKPVVIKYKECLKNHAATMGGNAIDGCGEFMPSGEEGSIEALTCSVCNCHRNFHRRETEGEEKTFFSPYLNHHQPPPQQRKLMFHHKMIKSPLPQQMIMPIGVTTAGSNSESEDLMEEEGGGSLTFRQPPPPPSPYSYGHNQKKRFRTKFTQEQKEKMISFAERVGWKIQRQEESVVQQLCQEIGIRRRVLKVWMHNNKQNLSKKSNNVSNNVDLSAGNNDITENLASTNP.

The segment at M1–H64 is disordered. Residues L39 to L56 are compositionally biased toward polar residues. The segment at Y87–E136 adopts a ZF-HD dimerization-type; degenerate zinc-finger fold. 2 disordered regions span residues T184–N220 and L281–P310. A compositionally biased stretch (acidic residues) spans E190–G199. The homeobox DNA-binding region spans K222–S285. The segment covering L281–N291 has biased composition (low complexity). The segment covering V292–P310 has biased composition (polar residues).

As to quaternary structure, homo- and heterodimer with other ZFHD proteins. Interacts with MIF2 and MIF3; these interactions prevent nuclear localization and DNA-binding to inhibit transcription regulation activity. Binds to ZHD1, ZHD2 and ZHD11. Interacts with HIPP30. Interacts with KIN10, KIN11 and FLZ8. Mostly expressed in flowers and inflorescence.

It localises to the nucleus. Functionally, putative transcription factor. The polypeptide is Zinc-finger homeodomain protein 3 (ZHD3) (Arabidopsis thaliana (Mouse-ear cress)).